The sequence spans 258 residues: Ribosomal RNA small subunit methyltransferase A (258 aa).

Residues His-13, Leu-15, Gly-40, Glu-61, Asp-86, and Asn-106 each coordinate S-adenosyl-L-methionine.

This sequence belongs to the class I-like SAM-binding methyltransferase superfamily. rRNA adenine N(6)-methyltransferase family. RsmA subfamily.

The protein localises to the cytoplasm. The enzyme catalyses adenosine(1518)/adenosine(1519) in 16S rRNA + 4 S-adenosyl-L-methionine = N(6)-dimethyladenosine(1518)/N(6)-dimethyladenosine(1519) in 16S rRNA + 4 S-adenosyl-L-homocysteine + 4 H(+). Functionally, specifically dimethylates two adjacent adenosines (A1518 and A1519) in the loop of a conserved hairpin near the 3'-end of 16S rRNA in the 30S particle. May play a critical role in biogenesis of 30S subunits. This is Ribosomal RNA small subunit methyltransferase A from Coxiella burnetii (strain CbuG_Q212) (Coxiella burnetii (strain Q212)).